Here is a 610-residue protein sequence, read N- to C-terminus: UvrABC system protein C (610 aa).

Residues Ser-16–Val-94 form the GIY-YIG domain. The UVR domain maps to Asp-204–Val-239.

It belongs to the UvrC family. As to quaternary structure, interacts with UvrB in an incision complex.

Its subcellular location is the cytoplasm. The UvrABC repair system catalyzes the recognition and processing of DNA lesions. UvrC both incises the 5' and 3' sides of the lesion. The N-terminal half is responsible for the 3' incision and the C-terminal half is responsible for the 5' incision. The polypeptide is UvrABC system protein C (Shigella boydii serotype 18 (strain CDC 3083-94 / BS512)).